The primary structure comprises 414 residues: 3-oxoacyl-[acyl-carrier-protein] synthase 2 (414 aa).

The 411-residue stretch at K3–R413 folds into the Ketosynthase family 3 (KS3) domain. Catalysis depends on for beta-ketoacyl synthase activity residues C164, H304, and H342.

This sequence belongs to the thiolase-like superfamily. Beta-ketoacyl-ACP synthases family. In terms of assembly, homodimer.

The catalysed reaction is a fatty acyl-[ACP] + malonyl-[ACP] + H(+) = a 3-oxoacyl-[ACP] + holo-[ACP] + CO2. It carries out the reaction (9Z)-hexadecenoyl-[ACP] + malonyl-[ACP] + H(+) = 3-oxo-(11Z)-octadecenoyl-[ACP] + holo-[ACP] + CO2. The protein operates within lipid metabolism; fatty acid biosynthesis. Functionally, involved in the type II fatty acid elongation cycle. Catalyzes the elongation of a wide range of acyl-ACP by the addition of two carbons from malonyl-ACP to an acyl acceptor. Can efficiently catalyze the conversion of palmitoleoyl-ACP (cis-hexadec-9-enoyl-ACP) to cis-vaccenoyl-ACP (cis-octadec-11-enoyl-ACP), an essential step in the thermal regulation of fatty acid composition. This chain is 3-oxoacyl-[acyl-carrier-protein] synthase 2 (fabF), found in Vibrio cholerae serotype O1 (strain ATCC 39315 / El Tor Inaba N16961).